Consider the following 97-residue polypeptide: Large ribosomal subunit protein uL23 (97 aa).

This sequence belongs to the universal ribosomal protein uL23 family. Part of the 50S ribosomal subunit. Contacts protein L29, and trigger factor when it is bound to the ribosome.

Its function is as follows. One of the early assembly proteins it binds 23S rRNA. One of the proteins that surrounds the polypeptide exit tunnel on the outside of the ribosome. Forms the main docking site for trigger factor binding to the ribosome. The chain is Large ribosomal subunit protein uL23 from Bartonella henselae (strain ATCC 49882 / DSM 28221 / CCUG 30454 / Houston 1) (Rochalimaea henselae).